We begin with the raw amino-acid sequence, 259 residues long: UPF0246 protein NGK_0633 (259 aa).

The protein belongs to the UPF0246 family.

This chain is UPF0246 protein NGK_0633, found in Neisseria gonorrhoeae (strain NCCP11945).